The primary structure comprises 218 residues: GEM-like protein 6 (218 aa).

The region spanning 96–174 is the GRAM domain; that stretch reads KIYKRLFKVC…CKINGVNQSQ (79 aa).

Belongs to the GEM family.

This chain is GEM-like protein 6, found in Arabidopsis thaliana (Mouse-ear cress).